A 380-amino-acid chain; its full sequence is MAPNPRKSHPLLKMINNSLIDLPAPSNISAWWNFGSLLALCLATQILTGLLLAMHYTADTTLAFSSVAHTCRDVQYGWLIRNMHANGASFFFICVYLHIGRGFYYGSYLHKETWNTGVLLLLTLMATAFVGYVLPWGQMSFWGATVITNMFSAIPYIGQTIVEWAWGGFSVDNPTLTRFFALHFLLPFLIAGLTLIHLTFLHESGSNNPLGIISNCDKIPFHPYYSLKDILGLMLLLLPLTTLALFSPNLLGDPENFTPANPLVTPPHIKPEWYFLFAYAILRSIPNKLGGVLALAASVLVLFLSPLLHKSKQRTMAFRPLSQLLFWTLVANLLILTWIGSQPLEHPFIIIGQLASTTYFTILLVLFPITSALENKMLNF.

4 consecutive transmembrane segments (helical) span residues 34 to 54 (FGSLLALCLATQILTGLLLAM), 78 to 99 (WLIRNMHANGASFFFICVYLHI), 114 to 134 (WNTGVLLLLTLMATAFVGYVL), and 179 to 199 (FFALHFLLPFLIAGLTLIHLT). Residues His-84 and His-98 each coordinate heme b. 2 residues coordinate heme b: His-183 and His-197. His-202 provides a ligand contact to a ubiquinone. 4 consecutive transmembrane segments (helical) span residues 227–247 (LKDILGLMLLLLPLTTLALFS), 289–309 (LGGVLALAASVLVLFLSPLLH), 321–341 (LSQLLFWTLVANLLILTWIGS), and 348–368 (FIIIGQLASTTYFTILLVLFP).

It belongs to the cytochrome b family. In terms of assembly, the cytochrome bc1 complex contains 11 subunits: 3 respiratory subunits (MT-CYB, CYC1 and UQCRFS1), 2 core proteins (UQCRC1 and UQCRC2) and 6 low-molecular weight proteins (UQCRH/QCR6, UQCRB/QCR7, UQCRQ/QCR8, UQCR10/QCR9, UQCR11/QCR10 and a cleavage product of UQCRFS1). This cytochrome bc1 complex then forms a dimer. Heme b serves as cofactor.

It is found in the mitochondrion inner membrane. Component of the ubiquinol-cytochrome c reductase complex (complex III or cytochrome b-c1 complex) that is part of the mitochondrial respiratory chain. The b-c1 complex mediates electron transfer from ubiquinol to cytochrome c. Contributes to the generation of a proton gradient across the mitochondrial membrane that is then used for ATP synthesis. In Oceanodroma melania (Black storm-petrel), this protein is Cytochrome b (MT-CYB).